The sequence spans 171 residues: MATRQSSYNYEEILSCGRGELFGPGNAQLPLPPMLMVHRITEISETGGAFDKGFIRAEYDVSPDDWYFPCHFQGNPIMPGCLGLDGMWQLTGFFLGWLGEEGRGMALSTGEVKFKGMVRPNTKLLQYGIDFKRVMRGRLVLGTADGWLKADGETIYQASDLRVGLSKEKAA.

His-71 is a catalytic residue.

It belongs to the thioester dehydratase family. FabA subfamily. In terms of assembly, homodimer.

Its subcellular location is the cytoplasm. The enzyme catalyses a (3R)-hydroxyacyl-[ACP] = a (2E)-enoyl-[ACP] + H2O. It catalyses the reaction (3R)-hydroxydecanoyl-[ACP] = (2E)-decenoyl-[ACP] + H2O. The catalysed reaction is (2E)-decenoyl-[ACP] = (3Z)-decenoyl-[ACP]. Its pathway is lipid metabolism; fatty acid biosynthesis. Its function is as follows. Necessary for the introduction of cis unsaturation into fatty acids. Catalyzes the dehydration of (3R)-3-hydroxydecanoyl-ACP to E-(2)-decenoyl-ACP and then its isomerization to Z-(3)-decenoyl-ACP. Can catalyze the dehydratase reaction for beta-hydroxyacyl-ACPs with saturated chain lengths up to 16:0, being most active on intermediate chain length. This is 3-hydroxydecanoyl-[acyl-carrier-protein] dehydratase from Agrobacterium fabrum (strain C58 / ATCC 33970) (Agrobacterium tumefaciens (strain C58)).